Here is a 483-residue protein sequence, read N- to C-terminus: MTKKTQDLTSWYDQLLVKAKLICHGEVKGTVCFLNNSWGLWMEIQQLYNDAIANKNQLSAIALTKFQPTTSFCYQVFQVQLPTLSFYSEYQKEKTHIKGFNPELFLINQVGQKQLNDPLVLRPTSEIAFCNLWKKQELSYHDLPLIYNQWTQVFRAEKNTRPFLRNSEFYWQETHGLFVDQSQSEQAAISFWNLYQDLIINKLCIPAFVGLKSESEKFAGAKNTWTIEAIMPDGQSLQCATSHDLGDTFTKSFTISYQSKTNQKMTPSSFSCGMSTRILGAIFLTHSDDYGLVLPWYLASKQVKLYLFDKNNNPKTRALAFLVKDFLEKLKIRFSFIEINNQLGKQLLKGEIEGIPLQMIVDNEKTINIFNRLTRLKTSLTFANLQTEFVNLVNNYHTEMYRKANDLVEQKLARVQTLKEIEQAFKNKKAVLCTVKLTGELEQHLKTKYQVSVRCVFKKSDVTQNCPFTNQPCFDSVLIARAY.

The protein belongs to the class-II aminoacyl-tRNA synthetase family. ProS type 3 subfamily. As to quaternary structure, homodimer.

It localises to the cytoplasm. It carries out the reaction tRNA(Pro) + L-proline + ATP = L-prolyl-tRNA(Pro) + AMP + diphosphate. In terms of biological role, catalyzes the attachment of proline to tRNA(Pro) in a two-step reaction: proline is first activated by ATP to form Pro-AMP and then transferred to the acceptor end of tRNA(Pro). In Mycoplasma genitalium (strain ATCC 33530 / DSM 19775 / NCTC 10195 / G37) (Mycoplasmoides genitalium), this protein is Proline--tRNA ligase.